The chain runs to 470 residues: Putative multidrug resistance protein MdtD (470 aa).

The Periplasmic portion of the chain corresponds to methionine 1–glutamine 11. Residues leucine 12–alanine 32 form a helical membrane-spanning segment. The Cytoplasmic portion of the chain corresponds to leucine 33–histidine 48. The helical transmembrane segment at methionine 49–alanine 69 threads the bilayer. At aspartate 70 to asparagine 76 the chain is on the periplasmic side. The helical transmembrane segment at isoleucine 77 to threonine 97 threads the bilayer. The Cytoplasmic segment spans residues leucine 98 to leucine 101. A helical transmembrane segment spans residues valine 102–methionine 124. The Periplasmic segment spans residues lysine 125–threonine 137. The chain crosses the membrane as a helical span at residues phenylalanine 138 to valine 158. Residues glutamate 159 to histidine 164 lie on the Cytoplasmic side of the membrane. A helical membrane pass occupies residues tryptophan 165–methionine 185. At proline 186–aspartate 196 the chain is on the periplasmic side. The helical transmembrane segment at leucine 197 to serine 217 threads the bilayer. The Cytoplasmic portion of the chain corresponds to lysine 218–glycine 221. A helical transmembrane segment spans residues isoleucine 222–leucine 242. Topologically, residues leucine 243–threonine 262 are periplasmic. The chain crosses the membrane as a helical span at residues phenylalanine 263–methionine 283. The Cytoplasmic segment spans residues threonine 284–proline 285. The helical transmembrane segment at valine 286 to methionine 306 threads the bilayer. The Periplasmic portion of the chain corresponds to valine 307–serine 341. The chain crosses the membrane as a helical span at residues leucine 342–leucine 362. At glutamine 363–serine 395 the chain is on the cytoplasmic side. The helical transmembrane segment at methionine 396–phenylalanine 416 threads the bilayer. At glycine 417–histidine 430 the chain is on the periplasmic side. A helical membrane pass occupies residues valine 431 to alanine 451. Over arginine 452–leucine 470 the chain is Cytoplasmic.

The protein belongs to the major facilitator superfamily. TCR/Tet family.

It localises to the cell inner membrane. The polypeptide is Putative multidrug resistance protein MdtD (Salmonella heidelberg (strain SL476)).